The chain runs to 194 residues: Leucyl/phenylalanyl-tRNA--protein transferase (194 aa).

Belongs to the L/F-transferase family.

The protein localises to the cytoplasm. The enzyme catalyses N-terminal L-lysyl-[protein] + L-leucyl-tRNA(Leu) = N-terminal L-leucyl-L-lysyl-[protein] + tRNA(Leu) + H(+). It catalyses the reaction N-terminal L-arginyl-[protein] + L-leucyl-tRNA(Leu) = N-terminal L-leucyl-L-arginyl-[protein] + tRNA(Leu) + H(+). It carries out the reaction L-phenylalanyl-tRNA(Phe) + an N-terminal L-alpha-aminoacyl-[protein] = an N-terminal L-phenylalanyl-L-alpha-aminoacyl-[protein] + tRNA(Phe). In terms of biological role, functions in the N-end rule pathway of protein degradation where it conjugates Leu, Phe and, less efficiently, Met from aminoacyl-tRNAs to the N-termini of proteins containing an N-terminal arginine or lysine. The protein is Leucyl/phenylalanyl-tRNA--protein transferase of Chlorobaculum parvum (strain DSM 263 / NCIMB 8327) (Chlorobium vibrioforme subsp. thiosulfatophilum).